The primary structure comprises 253 residues: UPF0758 protein Bxeno_A3578 (253 aa).

An MPN domain is found at 131–253 (LINSPEAVEN…VYSFARAGWP (123 aa)). His202, His204, and Asp215 together coordinate Zn(2+). The JAMM motif motif lies at 202–215 (HNHPSGAVQPSASD).

This sequence belongs to the UPF0758 family.

The sequence is that of UPF0758 protein Bxeno_A3578 from Paraburkholderia xenovorans (strain LB400).